We begin with the raw amino-acid sequence, 602 residues long: MNHIRNFSIIAHIDHGKSTLADRIIQRCGGLADREMEAQVLDSMDIEKERGITIKAQTAALQYKARDGKVYNLNLIDTPGHVDFSYEVSRSLSACEGALLVVDASQGVEAQTVANCYTALDLGVEVLPVLNKMDLPQADPDTAKAEIEDVIGIDASEAIAISAKTGMGIDDVLEQIVAKVPAPRGKPDAPLRAMIIDSWFDSYVGVVMLVRVVDGRLQKGERFKMMASGAAYEANNLGVFTPAQQSRDALEAGEVGYIIAGIKELKAAKVGDTITLEKKLPNNLGPATEALPGFKEIQPQVFAGLYPTEANQYDALRDALEKLQLNDASLHFEPEVSQALGFGFRCGFLGLLHMEIVQERLEREFDQDLITTAPSVVYEVVKGDGEVIMVENPSKMPDQGKIQEIREPIVTVHLYMPQDYVGPVMTLANQKRGVQMNMQYHGRQVMLTYELPLGEIVLDFFDKLKSVSRGYASMDYEFKEYRPSDVVKVDILLNGEKVDALSIIVHRSQSQYRGRAVAAKMREIISRQMFDVAIQAAIGANIIARETIKALRKNVLAKCYGGDITRKRKLLEKQKAGKKRMKQIGSVEVPQEAFLAILQVED.

The region spanning 2 to 184 (NHIRNFSIIA…QIVAKVPAPR (183 aa)) is the tr-type G domain. GTP-binding positions include 14–19 (DHGKST) and 131–134 (NKMD).

The protein belongs to the TRAFAC class translation factor GTPase superfamily. Classic translation factor GTPase family. LepA subfamily.

The protein localises to the cell inner membrane. It catalyses the reaction GTP + H2O = GDP + phosphate + H(+). Functionally, required for accurate and efficient protein synthesis under certain stress conditions. May act as a fidelity factor of the translation reaction, by catalyzing a one-codon backward translocation of tRNAs on improperly translocated ribosomes. Back-translocation proceeds from a post-translocation (POST) complex to a pre-translocation (PRE) complex, thus giving elongation factor G a second chance to translocate the tRNAs correctly. Binds to ribosomes in a GTP-dependent manner. In Acidovorax ebreus (strain TPSY) (Diaphorobacter sp. (strain TPSY)), this protein is Elongation factor 4.